A 256-amino-acid chain; its full sequence is 5-oxoprolinase subunit A (256 aa).

This sequence belongs to the LamB/PxpA family. As to quaternary structure, forms a complex composed of PxpA, PxpB and PxpC.

The catalysed reaction is 5-oxo-L-proline + ATP + 2 H2O = L-glutamate + ADP + phosphate + H(+). Its function is as follows. Catalyzes the cleavage of 5-oxoproline to form L-glutamate coupled to the hydrolysis of ATP to ADP and inorganic phosphate. In Alkaliphilus metalliredigens (strain QYMF), this protein is 5-oxoprolinase subunit A.